The sequence spans 463 residues: Cysteine--tRNA ligase (463 aa).

Cysteine 28 is a Zn(2+) binding site. Residues 30 to 40 (VTIYDLCHIGH) carry the 'HIGH' region motif. The Zn(2+) site is built by cysteine 209, histidine 234, and glutamate 238. The short motif at 266–270 (KMSKS) is the 'KMSKS' region element. ATP is bound at residue lysine 269.

It belongs to the class-I aminoacyl-tRNA synthetase family. In terms of assembly, monomer. Zn(2+) serves as cofactor.

It is found in the cytoplasm. The catalysed reaction is tRNA(Cys) + L-cysteine + ATP = L-cysteinyl-tRNA(Cys) + AMP + diphosphate. This Tolumonas auensis (strain DSM 9187 / NBRC 110442 / TA 4) protein is Cysteine--tRNA ligase.